We begin with the raw amino-acid sequence, 432 residues long: Glutamate-gated chloride channel subunit beta (432 aa).

Positions 1–18 (MSQYMMVAVAAVVAVAGS) are cleaved as a signal peptide. Residues 19-249 (SQISRRSTGG…MQLTLKRQFS (231 aa)) lie on the Extracellular side of the membrane. N-linked (GlcNAc...) asparagine glycosylation occurs at Asn52. L-glutamate-binding residues include Arg69, Arg88, and Ser155. An intrachain disulfide couples Cys164 to Cys178. Ser184 serves as a coordination point for L-glutamate. An N-linked (GlcNAc...) asparagine glycan is attached at Asn219. The cysteines at positions 226 and 237 are disulfide-linked. Residues 250 to 272 (YYLVQLYGPTTMIVIVSWVSFWI) form a helical membrane-spanning segment. At 273-277 (DMHST) the chain is on the cytoplasmic side. A helical transmembrane segment spans residues 278–299 (AGRVALGVTTLLTMTTMQAAIN). Over 300–306 (AKLPPVS) the chain is Extracellular. The chain crosses the membrane as a helical span at residues 307–327 (YVKVVDVWLGACQTFVFGALL). Topologically, residues 328–402 (EYAFVSYQDS…KPDYLPAKID (75 aa)) are cytoplasmic. The chain crosses the membrane as a helical span at residues 403–426 (YYARFCVPLGFLAFNAIYWTSCLV). Topologically, residues 427–432 (MVSRLV) are extracellular.

This sequence belongs to the ligand-gated ion channel (TC 1.A.9) family. Glutamate-gated chloride channel (TC 1.A.9.4) subfamily. Pentamer. In terms of tissue distribution, expressed in motor neuron commissures at the anterior portion of the worms.

The protein resides in the postsynaptic cell membrane. Its subcellular location is the cell membrane. In terms of biological role, glutamate-gated chloride channel subunit; channel properties may be modulated by the formation of heteromeric channels. Glutamate binding triggers a rapidly reversible current, while the anti-helmintic drug ivermectin triggers a permanently open channel configuration. The polypeptide is Glutamate-gated chloride channel subunit beta (Haemonchus contortus (Barber pole worm)).